A 59-amino-acid chain; its full sequence is Large ribosomal subunit protein bL32c (59 aa).

A compositionally biased stretch (basic residues) spans 1–19 (MAVPKKRTSKAKKNARKAN). The interval 1-24 (MAVPKKRTSKAKKNARKANWKNQA) is disordered.

The protein belongs to the bacterial ribosomal protein bL32 family.

The protein localises to the plastid. It localises to the chloroplast. This chain is Large ribosomal subunit protein bL32c (rpl32), found in Porphyra purpurea (Red seaweed).